Consider the following 78-residue polypeptide: UPF0349 protein GK2958 (78 aa).

Belongs to the UPF0349 family.

The protein is UPF0349 protein GK2958 of Geobacillus kaustophilus (strain HTA426).